Reading from the N-terminus, the 623-residue chain is Sphingomyelinase C 2 (623 aa).

Residues 1 to 25 (MINKITKPKLLIGYYLLLFSLIRCL) form the signal peptide. Composition is skewed to low complexity over residues 51-61 (VNSVSINNDPA) and 67-80 (NPAS…NAVP). Positions 51–121 (VNSVSINNDP…DPNPANLASA (71 aa)) are disordered. Residues 89 to 102 (NPVNPASANSNQVN) are compositionally biased toward polar residues. Residues 110 to 121 (PADPNPANLASA) show a composition bias toward low complexity.

Its subcellular location is the secreted. It catalyses the reaction a sphingomyelin + H2O = phosphocholine + an N-acylsphing-4-enine + H(+). In Leptospira interrogans serogroup Icterohaemorrhagiae serovar Lai (strain 56601), this protein is Sphingomyelinase C 2 (sph2).